The following is a 367-amino-acid chain: Pepsin A (367 aa).

A propeptide spans Ser1–Leu42 (activation peptide). The 306-residue stretch at Tyr59 to Ser364 folds into the Peptidase A1 domain. Asp77 is an active-site residue. Cys90 and Cys95 form a disulfide bridge. N-linked (GlcNAc...) asparagine glycosylation occurs at Asn113. Cys251 and Cys255 are joined by a disulfide. Asp260 is a catalytic residue. A disulfide bridge links Cys290 with Cys323.

It belongs to the peptidase A1 family.

The enzyme catalyses Preferential cleavage: hydrophobic, preferably aromatic, residues in P1 and P1' positions. Cleaves 1-Phe-|-Val-2, 4-Gln-|-His-5, 13-Glu-|-Ala-14, 14-Ala-|-Leu-15, 15-Leu-|-Tyr-16, 16-Tyr-|-Leu-17, 23-Gly-|-Phe-24, 24-Phe-|-Phe-25 and 25-Phe-|-Tyr-26 bonds in the B chain of insulin.. Functionally, shows particularly broad specificity; although bonds involving phenylalanine and leucine are preferred, many others are also cleaved to some extent. This chain is Pepsin A (PGA), found in Gallus gallus (Chicken).